The primary structure comprises 350 residues: 4-hydroxy-3-methylbut-2-enyl diphosphate reductase (350 aa).

Cys19 lines the [4Fe-4S] cluster pocket. His48 and His84 together coordinate (2E)-4-hydroxy-3-methylbut-2-enyl diphosphate. Residues His48 and His84 each coordinate dimethylallyl diphosphate. Residues His48 and His84 each coordinate isopentenyl diphosphate. Cys106 is a binding site for [4Fe-4S] cluster. Residue His134 coordinates (2E)-4-hydroxy-3-methylbut-2-enyl diphosphate. His134 provides a ligand contact to dimethylallyl diphosphate. His134 is an isopentenyl diphosphate binding site. Residue Glu136 is the Proton donor of the active site. Thr175 contributes to the (2E)-4-hydroxy-3-methylbut-2-enyl diphosphate binding site. [4Fe-4S] cluster is bound at residue Cys205. Residues Ser233, Ser234, Asn235, and Ser278 each contribute to the (2E)-4-hydroxy-3-methylbut-2-enyl diphosphate site. Dimethylallyl diphosphate is bound by residues Ser233, Ser234, Asn235, and Ser278. The isopentenyl diphosphate site is built by Ser233, Ser234, Asn235, and Ser278.

This sequence belongs to the IspH family. It depends on [4Fe-4S] cluster as a cofactor.

The enzyme catalyses isopentenyl diphosphate + 2 oxidized [2Fe-2S]-[ferredoxin] + H2O = (2E)-4-hydroxy-3-methylbut-2-enyl diphosphate + 2 reduced [2Fe-2S]-[ferredoxin] + 2 H(+). It carries out the reaction dimethylallyl diphosphate + 2 oxidized [2Fe-2S]-[ferredoxin] + H2O = (2E)-4-hydroxy-3-methylbut-2-enyl diphosphate + 2 reduced [2Fe-2S]-[ferredoxin] + 2 H(+). The protein operates within isoprenoid biosynthesis; dimethylallyl diphosphate biosynthesis; dimethylallyl diphosphate from (2E)-4-hydroxy-3-methylbutenyl diphosphate: step 1/1. It functions in the pathway isoprenoid biosynthesis; isopentenyl diphosphate biosynthesis via DXP pathway; isopentenyl diphosphate from 1-deoxy-D-xylulose 5-phosphate: step 6/6. In terms of biological role, catalyzes the conversion of 1-hydroxy-2-methyl-2-(E)-butenyl 4-diphosphate (HMBPP) into a mixture of isopentenyl diphosphate (IPP) and dimethylallyl diphosphate (DMAPP). Acts in the terminal step of the DOXP/MEP pathway for isoprenoid precursor biosynthesis. The chain is 4-hydroxy-3-methylbut-2-enyl diphosphate reductase from Brucella anthropi (strain ATCC 49188 / DSM 6882 / CCUG 24695 / JCM 21032 / LMG 3331 / NBRC 15819 / NCTC 12168 / Alc 37) (Ochrobactrum anthropi).